A 478-amino-acid chain; its full sequence is DNA-directed RNA polymerase subunit alpha (478 aa).

Positions 1–341 (MNKKIQDFFL…LDCMRLLNYE (341 aa)) are alpha N-terminal domain (alpha-NTD). The alpha C-terminal domain (alpha-CTD) stretch occupies residues 365-478 (RFYNSREDKT…KLGSRNEKNL (114 aa)).

It belongs to the RNA polymerase alpha chain family. As to quaternary structure, in plastids the minimal PEP RNA polymerase catalytic core is composed of four subunits: alpha, beta, beta', and beta''. When a (nuclear-encoded) sigma factor is associated with the core the holoenzyme is formed, which can initiate transcription.

It is found in the plastid. It localises to the chloroplast. It catalyses the reaction RNA(n) + a ribonucleoside 5'-triphosphate = RNA(n+1) + diphosphate. In terms of biological role, DNA-dependent RNA polymerase catalyzes the transcription of DNA into RNA using the four ribonucleoside triphosphates as substrates. In Tetradesmus obliquus (Green alga), this protein is DNA-directed RNA polymerase subunit alpha (rpoA).